The chain runs to 379 residues: Homoserine O-succinyltransferase (379 aa).

Positions 51 to 360 (NAVLICHALS…DAPQGHDAFL (310 aa)) constitute an AB hydrolase-1 domain. Serine 157 acts as the Nucleophile in catalysis. Arginine 227 serves as a coordination point for substrate. Active-site residues include aspartate 323 and histidine 356. Aspartate 357 contributes to the substrate binding site.

It belongs to the AB hydrolase superfamily. MetX family. In terms of assembly, homodimer.

The protein resides in the cytoplasm. The catalysed reaction is L-homoserine + succinyl-CoA = O-succinyl-L-homoserine + CoA. Its pathway is amino-acid biosynthesis; L-methionine biosynthesis via de novo pathway; O-succinyl-L-homoserine from L-homoserine: step 1/1. Requires MetW for activity. Functionally, transfers a succinyl group from succinyl-CoA to L-homoserine, forming succinyl-L-homoserine. This is Homoserine O-succinyltransferase from Pseudomonas syringae pv. syringae (strain B728a).